We begin with the raw amino-acid sequence, 304 residues long: Bifunctional phosphoglucose/phosphomannose isomerase (304 aa).

Residues 16 to 147 enclose the SIS domain; it reads FDKSFKVGKY…KPKIGDVDEA (132 aa). 6 residues coordinate D-fructose 6-phosphate: Gly35, Ser36, Ser74, Ser76, Thr79, and Arg122. Residue Glu196 is the Proton acceptor of the active site. Residues His212 and Lys300 each contribute to the D-fructose 6-phosphate site. The active-site Proton donor is His212. The active-site Proton acceptor is the Lys300.

The protein belongs to the PGI/PMI family. In terms of assembly, homodimer.

It catalyses the reaction alpha-D-glucose 6-phosphate = beta-D-fructose 6-phosphate. The catalysed reaction is D-mannose 6-phosphate = D-fructose 6-phosphate. In terms of biological role, dual specificity isomerase that catalyzes the isomerization of both glucose-6-phosphate and mannose-6-phosphate to fructose-6-phosphate. The sequence is that of Bifunctional phosphoglucose/phosphomannose isomerase from Thermoplasma volcanium (strain ATCC 51530 / DSM 4299 / JCM 9571 / NBRC 15438 / GSS1).